Reading from the N-terminus, the 313-residue chain is Olfactory receptor 51A4 (313 aa).

Residues 1 to 27 (MSIINTSYVEITTFFLVGMPGLEYAHI) lie on the Extracellular side of the membrane. An N-linked (GlcNAc...) asparagine glycan is attached at asparagine 5. A helical transmembrane segment spans residues 28 to 48 (WISIPICSMYLIAILGNGTIL). The Cytoplasmic portion of the chain corresponds to 49–56 (FIIKTEPS). Residues 57–77 (LHEPMYYFLSMLAMSDLGLSL) form a helical membrane-spanning segment. The Extracellular segment spans residues 78 to 101 (SSLPTVLSIFLFNAPEISSNACFA). Cysteine 99 and cysteine 191 are joined by a disulfide. Residues 102–122 (QEFFIHGFSVLESSVLLIMSF) form a helical membrane-spanning segment. Residues 123–141 (DRFLAIHNPLRYTSILTTV) are Cytoplasmic-facing. A helical transmembrane segment spans residues 142 to 162 (RVAQIGIVFSFKSMLLVLPFP). The Extracellular portion of the chain corresponds to 163–198 (FTLRNLRYCKKNQLSHSYCLHQDVMKLACSDNRIDV). The chain crosses the membrane as a helical span at residues 199–218 (IYGFFGALCLMVDFILIAVS). Residues 219-238 (YTLILKTVLGIASKKEQLKA) lie on the Cytoplasmic side of the membrane. A helical transmembrane segment spans residues 239 to 259 (LNTCVSHICAVIIFYLPIINL). At 260-274 (AVVHRFARHVSPLIN) the chain is on the extracellular side. Residues 275 to 295 (VLMANVLLLVPPLTNPIVYCV) traverse the membrane as a helical segment. Residues 296-313 (KTKQIRVRVVAKLCQRKI) are Cytoplasmic-facing.

It belongs to the G-protein coupled receptor 1 family.

It is found in the cell membrane. Functionally, odorant receptor. The chain is Olfactory receptor 51A4 (OR51A4) from Homo sapiens (Human).